Reading from the N-terminus, the 121-residue chain is uncharacterized protein (121 aa).

2 helical membrane-spanning segments follow: residues 16-36 (GFMV…GFAV) and 74-94 (LYIA…MKTI).

The protein localises to the cell membrane. This is an uncharacterized protein from Bacillus subtilis (strain 168).